A 145-amino-acid polypeptide reads, in one-letter code: Superoxide dismutase [Mn/Fe] (145 aa).

The Fe(3+) site is built by His10 and His64. Positions 10 and 64 each coordinate Mn(2+).

It belongs to the iron/manganese superoxide dismutase family. The cofactor is Mn(2+). Requires Fe(3+) as cofactor.

It catalyses the reaction 2 superoxide + 2 H(+) = H2O2 + O2. Functionally, destroys superoxide anion radicals which are normally produced within the cells and which are toxic to biological systems. Catalyzes the dismutation of superoxide anion radicals into O2 and H2O2 by successive reduction and oxidation of the transition metal ion at the active site. The protein is Superoxide dismutase [Mn/Fe] (sodA) of Streptococcus canis.